The chain runs to 68 residues: uncharacterized protein (68 aa).

The N-terminal stretch at 1–21 is a signal peptide; the sequence is MELYREYPAWLIFLRRTYAVA.

This is an uncharacterized protein from Escherichia coli O157:H7.